The sequence spans 548 residues: Chaperonin GroEL (548 aa).

ATP-binding positions include 30–33 (TLGP), K51, 87–91 (DGTTT), G415, 479–481 (NAA), and D495.

This sequence belongs to the chaperonin (HSP60) family. In terms of assembly, forms a cylinder of 14 subunits composed of two heptameric rings stacked back-to-back. Interacts with the co-chaperonin GroES.

The protein resides in the cytoplasm. The enzyme catalyses ATP + H2O + a folded polypeptide = ADP + phosphate + an unfolded polypeptide.. Its function is as follows. Together with its co-chaperonin GroES, plays an essential role in assisting protein folding. The GroEL-GroES system forms a nano-cage that allows encapsulation of the non-native substrate proteins and provides a physical environment optimized to promote and accelerate protein folding. This is Chaperonin GroEL from Escherichia fergusonii (strain ATCC 35469 / DSM 13698 / CCUG 18766 / IAM 14443 / JCM 21226 / LMG 7866 / NBRC 102419 / NCTC 12128 / CDC 0568-73).